Reading from the N-terminus, the 1226-residue chain is Chromosome-associated kinesin KIF4 (1226 aa).

The region spanning 8–337 (PVRVALRCRP…LRYADRARKI (330 aa)) is the Kinesin motor domain. 87-94 (GQTGSGKT) contacts ATP. A coiled-coil region spans residues 351-1006 (ELQRLKLQVQ…YKQKLALLHV (656 aa)). Over residues 494-505 (EAASFPVPEEDS) the composition is skewed to acidic residues. Disordered stretches follow at residues 494–516 (EAAS…GFTT), 722–741 (QRQK…GMEG), and 1052–1078 (DLLS…KQSK). Basic and acidic residues predominate over residues 722–735 (QRQKEAMEKRKDSQ). Positions 1007 to 1226 (ASGKKLHNIL…SGCSAITEDE (220 aa)) are globular. Positions 1053-1064 (LLSESESEEESD) are enriched in acidic residues.

Belongs to the TRAFAC class myosin-kinesin ATPase superfamily. Kinesin family. Chromokinesin subfamily. Requires [2Fe-2S] cluster as cofactor. The cofactor is [4Fe-4S] cluster. As to expression, expressed in oocytes, eggs, testes and brain.

It is found in the nucleus. Its subcellular location is the chromosome. The protein localises to the cytoplasm. The protein resides in the cytoskeleton. Iron-sulfur (Fe-S) cluster binding motor protein that has a role in chromosome segregation during mitosis. Required for mitotic chromosomal positioning and bipolar spindle stabilization. This is Chromosome-associated kinesin KIF4 (kif4) from Xenopus laevis (African clawed frog).